Here is a 67-residue protein sequence, read N- to C-terminus: UPF0434 protein Reut_A0592 (67 aa).

The protein belongs to the UPF0434 family.

This chain is UPF0434 protein Reut_A0592, found in Cupriavidus pinatubonensis (strain JMP 134 / LMG 1197) (Cupriavidus necator (strain JMP 134)).